We begin with the raw amino-acid sequence, 162 residues long: Inorganic pyrophosphatase (162 aa).

Residue glutamate 8 participates in Mg(2+) binding. Lysine 16, arginine 30, and tyrosine 42 together coordinate substrate. Aspartate 52, aspartate 57, aspartate 84, and aspartate 89 together coordinate Mg(2+). The active-site Proton acceptor is aspartate 89. A substrate-binding site is contributed by tyrosine 126.

It belongs to the PPase family. In terms of assembly, homohexamer. It depends on Mg(2+) as a cofactor.

It is found in the cytoplasm. The catalysed reaction is diphosphate + H2O = 2 phosphate + H(+). Functionally, catalyzes the hydrolysis of inorganic pyrophosphate (PPi) forming two phosphate ions. The polypeptide is Inorganic pyrophosphatase (Mycobacterium leprae (strain TN)).